A 456-amino-acid polypeptide reads, in one-letter code: Cysteine--tRNA ligase (456 aa).

Position 29 (cysteine 29) interacts with Zn(2+). The 'HIGH' region motif lies at 31-41 (PTVYDYAHVGN). The Zn(2+) site is built by cysteine 209, histidine 234, and glutamate 238. The short motif at 267–271 (KMSKS) is the 'KMSKS' region element. Lysine 270 is an ATP binding site.

This sequence belongs to the class-I aminoacyl-tRNA synthetase family. As to quaternary structure, monomer. The cofactor is Zn(2+).

The protein localises to the cytoplasm. It catalyses the reaction tRNA(Cys) + L-cysteine + ATP = L-cysteinyl-tRNA(Cys) + AMP + diphosphate. The sequence is that of Cysteine--tRNA ligase from Rhodospirillum centenum (strain ATCC 51521 / SW).